A 1704-amino-acid polypeptide reads, in one-letter code: Villidin (1704 aa).

4 WD repeats span residues 82–122, 133–173, 180–221, and 225–271; these read GHTD…LIKD, KQQK…EQSS, GHED…TPIQ, and THEG…SSQP. Disordered stretches follow at residues 439–460 and 606–721; these read IGNS…DSPF and SVPS…NSST. The segment covering 442 to 456 has biased composition (gly residues); sequence SGSGGGGGDGDGNGG. The region spanning 459 to 563 is the PH 1 domain; it reads PFITEGIVKQ…WCQSINAYRE (105 aa). Low complexity-rich tracts occupy residues 613-636, 651-701, and 709-721; these read QQQQ…TPTQ, SLKS…SSSS, and NNST…NSST. PH domains lie at 727–828 and 871–969; these read DIVI…QNLK and EQPL…AARK. Residues 848–877 are disordered; it reads LISSPMSDDESNTNEGGVEEEEEEQPLEGQ. Residues 854–873 are compositionally biased toward acidic residues; that stretch reads SDDESNTNEGGVEEEEEEQP. Gelsolin-like repeat units lie at residues 1025–1119, 1138–1241, 1293–1390, 1404–1494, and 1520–1615; these read KQKI…LGGN, IKTT…FANY, GRVK…FKTK, KKPS…FEST, and RFFV…FRAW. An HP domain is found at 1641 to 1704; sequence DYLKEIYTYE…EGIKKELFLF (64 aa).

It localises to the membrane. The protein resides in the cytoplasm. Its subcellular location is the cytoskeleton. May function as a linker between membranes and the actin cytoskeleton. The sequence is that of Villidin (vilA) from Dictyostelium discoideum (Social amoeba).